A 133-amino-acid chain; its full sequence is Small ribosomal subunit protein bS16 (133 aa).

The span at 83–101 (KRDARSNPKKAEPGKKAQE) shows a compositional bias: basic and acidic residues. The segment at 83-102 (KRDARSNPKKAEPGKKAQER) is disordered.

Belongs to the bacterial ribosomal protein bS16 family.

This Mesorhizobium japonicum (strain LMG 29417 / CECT 9101 / MAFF 303099) (Mesorhizobium loti (strain MAFF 303099)) protein is Small ribosomal subunit protein bS16.